We begin with the raw amino-acid sequence, 109 residues long: Glutaredoxin-8 (109 aa).

The 105-residue stretch at 5–109 folds into the Glutaredoxin domain; that stretch reads VTKAEEMIKS…EELTKIGLLP (105 aa). Cysteines 25 and 28 form a disulfide.

It belongs to the glutaredoxin family. In terms of assembly, monomer.

It is found in the cytoplasm. In terms of biological role, glutathione-dependent oxidoreductase with lower activity compared to the other members of the glutaredoxin family. The disulfide bond functions as an electron carrier in the glutathione-dependent synthesis of deoxyribonucleotides by the enzyme ribonucleotide reductase. In Saccharomyces cerevisiae (strain ATCC 204508 / S288c) (Baker's yeast), this protein is Glutaredoxin-8 (GRX8).